The following is a 481-amino-acid chain: uncharacterized protein (481 aa).

Belongs to the UbiD family.

This is an uncharacterized protein from Archaeoglobus fulgidus (strain ATCC 49558 / DSM 4304 / JCM 9628 / NBRC 100126 / VC-16).